The following is a 186-amino-acid chain: Fanconi anemia core complex-associated protein 20 (186 aa).

Disordered regions lie at residues 1 to 30 and 50 to 90; these read MEEE…PWFL and TADW…GSKT. A compositionally biased stretch (basic residues) spans 7–16; that stretch reads LRGRLSRRRP. A Phosphoserine modification is found at Ser-119. Residues 150–186 form a UBZ2-type zinc finger; sequence LLSCPLCQKAFDPKLTQLDVDSHLAQCLAECTEDVVW. Zn(2+) contacts are provided by Cys-153, Cys-156, His-172, and Cys-176.

In terms of assembly, component of the Fanconi anemia (FA) complex. Interacts with FANCA; interaction is direct. Interacts with REV1.

It is found in the nucleus. The protein localises to the chromosome. Component of the Fanconi anemia (FA) complex required to recruit the FA complex to DNA interstrand cross-links (ICLs) and promote ICLs repair. Following DNA damage recognizes and binds 'Lys-63'-linked ubiquitin generated by RNF8 at ICLs and recruits other components of the FA complex. Promotes translesion synthesis via interaction with REV1. The polypeptide is Fanconi anemia core complex-associated protein 20 (Mus musculus (Mouse)).